We begin with the raw amino-acid sequence, 278 residues long: Large ribosomal subunit protein uL2 (278 aa).

A disordered region spans residues 208–278 (AGRSRWMGKR…LIIRHRKGRK (71 aa)). A compositionally biased stretch (basic residues) spans 209–219 (GRSRWMGKRPQ). Residues 258–270 (KTRDSKKASEKLI) show a composition bias toward basic and acidic residues.

The protein belongs to the universal ribosomal protein uL2 family. As to quaternary structure, part of the 50S ribosomal subunit. Forms a bridge to the 30S subunit in the 70S ribosome.

Its function is as follows. One of the primary rRNA binding proteins. Required for association of the 30S and 50S subunits to form the 70S ribosome, for tRNA binding and peptide bond formation. It has been suggested to have peptidyltransferase activity; this is somewhat controversial. Makes several contacts with the 16S rRNA in the 70S ribosome. In Lactobacillus delbrueckii subsp. bulgaricus (strain ATCC 11842 / DSM 20081 / BCRC 10696 / JCM 1002 / NBRC 13953 / NCIMB 11778 / NCTC 12712 / WDCM 00102 / Lb 14), this protein is Large ribosomal subunit protein uL2.